The following is a 299-amino-acid chain: tRNA dimethylallyltransferase (299 aa).

Residue 10 to 17 (GPTASGKS) coordinates ATP. 12 to 17 (TASGKS) is a substrate binding site.

Belongs to the IPP transferase family. In terms of assembly, monomer. Requires Mg(2+) as cofactor.

It carries out the reaction adenosine(37) in tRNA + dimethylallyl diphosphate = N(6)-dimethylallyladenosine(37) in tRNA + diphosphate. Functionally, catalyzes the transfer of a dimethylallyl group onto the adenine at position 37 in tRNAs that read codons beginning with uridine, leading to the formation of N6-(dimethylallyl)adenosine (i(6)A). The protein is tRNA dimethylallyltransferase of Malacoplasma penetrans (strain HF-2) (Mycoplasma penetrans).